The following is a 168-amino-acid chain: Large ribosomal subunit protein uL5 (168 aa).

Belongs to the universal ribosomal protein uL5 family. In terms of assembly, part of the 50S ribosomal subunit; contacts the 5S rRNA and probably tRNA. Forms a bridge to the 30S subunit in the 70S ribosome.

This is one of the proteins that bind and probably mediate the attachment of the 5S RNA into the large ribosomal subunit, where it forms part of the central protuberance. In the 70S ribosome it contacts protein S13 of the 30S subunit (bridge B1b), connecting the 2 subunits; this bridge is implicated in subunit movement. May contact the P site tRNA; the 5S rRNA and some of its associated proteins might help stabilize positioning of ribosome-bound tRNAs. In Methanosphaera stadtmanae (strain ATCC 43021 / DSM 3091 / JCM 11832 / MCB-3), this protein is Large ribosomal subunit protein uL5.